A 627-amino-acid polypeptide reads, in one-letter code: Neutral endopeptidase (627 aa).

A Peptidase M13 domain is found at 1-627; the sequence is MTRIQDDLFA…RAPENRLKIW (627 aa). His475 contacts Zn(2+). Residue Glu476 is part of the active site. Zn(2+)-binding residues include His479 and Glu535. Asp539 (proton donor) is an active-site residue.

This sequence belongs to the peptidase M13 family. As to quaternary structure, monomer. Requires Zn(2+) as cofactor.

Endopeptidase with broad substrate specificity for several oligopeptides. The polypeptide is Neutral endopeptidase (pepO) (Lactococcus lactis subsp. lactis (strain IL1403) (Streptococcus lactis)).